The following is a 56-amino-acid chain: Per os infectivity factor AC110 (56 aa).

Plays an essential role in the process of oral infection. May participate in the crossing of occlusion-derived virions through the host peritrophic membrane during oral infection. In Autographa californica nuclear polyhedrosis virus (AcMNPV), this protein is Per os infectivity factor AC110.